The primary structure comprises 484 residues: Nuclear rim protein 1 (484 aa).

Ser3 is subject to Phosphoserine. 2 helical membrane-spanning segments follow: residues 145-165 (FTIF…MFGY) and 252-272 (TAIV…AIVF). The disordered stretch occupies residues 416 to 457 (SSNENLEKGGAFLPNQDQNRPSKSLSPLRKTPLSARQKRFEG). The residue at position 417 (Ser417) is a Phosphoserine. Residues 430–440 (NQDQNRPSKSL) are compositionally biased toward polar residues. Ser474 bears the Phosphoserine mark.

It belongs to the NUR1 family. As to quaternary structure, interacts with CSM1.

The protein localises to the nucleus membrane. Member of a perinuclear network that controls recombination at multiple loci to maintain genome stability. Required for rDNA repeat stability. The polypeptide is Nuclear rim protein 1 (NUR1) (Saccharomyces cerevisiae (strain Lalvin EC1118 / Prise de mousse) (Baker's yeast)).